The chain runs to 285 residues: Probable endonuclease 4 (285 aa).

Residues H69, H109, E145, D179, H182, H216, D229, H231, and E261 each coordinate Zn(2+).

It belongs to the AP endonuclease 2 family. Zn(2+) is required as a cofactor.

The catalysed reaction is Endonucleolytic cleavage to 5'-phosphooligonucleotide end-products.. Functionally, endonuclease IV plays a role in DNA repair. It cleaves phosphodiester bonds at apurinic or apyrimidinic (AP) sites, generating a 3'-hydroxyl group and a 5'-terminal sugar phosphate. The protein is Probable endonuclease 4 of Salmonella schwarzengrund (strain CVM19633).